The sequence spans 259 residues: Ribosomal RNA small subunit methyltransferase A (259 aa).

S-adenosyl-L-methionine contacts are provided by Asn13, Leu15, Gly40, Glu61, Asp85, and Asn103.

The protein belongs to the class I-like SAM-binding methyltransferase superfamily. rRNA adenine N(6)-methyltransferase family. RsmA subfamily.

It localises to the cytoplasm. The enzyme catalyses adenosine(1518)/adenosine(1519) in 16S rRNA + 4 S-adenosyl-L-methionine = N(6)-dimethyladenosine(1518)/N(6)-dimethyladenosine(1519) in 16S rRNA + 4 S-adenosyl-L-homocysteine + 4 H(+). Specifically dimethylates two adjacent adenosines (A1518 and A1519) in the loop of a conserved hairpin near the 3'-end of 16S rRNA in the 30S particle. May play a critical role in biogenesis of 30S subunits. The protein is Ribosomal RNA small subunit methyltransferase A of Neisseria meningitidis serogroup C / serotype 2a (strain ATCC 700532 / DSM 15464 / FAM18).